The chain runs to 344 residues: AI-2 transport protein TqsA (344 aa).

At 1 to 4 the chain is on the cytoplasmic side; sequence MAKP. A helical membrane pass occupies residues 5–25; the sequence is IITLNGLKIVIMLGMLVIILC. Topologically, residues 26 to 30 are periplasmic; it reads GIRFA. The chain crosses the membrane as a helical span at residues 31-51; sequence AEIIVPFILALFIAVILNPLV. Topologically, residues 52-61 are cytoplasmic; sequence QHMVRWRVPR. Residues 62–82 traverse the membrane as a helical segment; sequence VLAVSILMTIIVMAMVLLLAY. Over 83 to 149 the chain is Periplasmic; it reads LGSALNELTR…LLTQLSNAMS (67 aa). The helical transmembrane segment at 150 to 170 threads the bilayer; it reads SIFLLLLTVLFMLLEVPQLPG. Residues 171 to 196 lie on the Cytoplasmic side of the membrane; the sequence is KFQQMMARPVEGMAAIQRAIDSVSHY. A helical transmembrane segment spans residues 197–217; it reads LVLKTAISIITGLVAWAMLAA. Residues 218–221 are Periplasmic-facing; that stretch reads LDVR. Residues 222–242 traverse the membrane as a helical segment; that stretch reads FAFVWGLLAFALNYIPNIGSV. Topologically, residues 243–257 are cytoplasmic; the sequence is LAAIPPIAQVLVFNG. A helical membrane pass occupies residues 258–278; it reads FYEALLVLAGYLLINLVFGNI. Residues 279-292 are Periplasmic-facing; it reads LEPRIMGRGLGLST. Residues 293-313 traverse the membrane as a helical segment; it reads LVVFLSLIFWGWLLGPVGMLL. The Cytoplasmic segment spans residues 314–344; that stretch reads SVPLTIIVKIALEQTAGGQSIAVLLSDLNKE.

It belongs to the autoinducer-2 exporter (AI-2E) (TC 2.A.86) family.

The protein localises to the cell inner membrane. The enzyme catalyses (2R,4S)-2-methyltetrahydrofuran-2,3,3,4-tetrol(in) = (2R,4S)-2-methyltetrahydrofuran-2,3,3,4-tetrol(out). In terms of biological role, involved in the transport of the quorum-sensing signal autoinducer 2 (AI-2). Controls the transport of AI-2 either by enhancing its secretion or inhibiting its uptake and consequently represses biofilm formation and motility and affects the global gene expression in biofilms. The protein is AI-2 transport protein TqsA of Escherichia coli (strain K12).